A 405-amino-acid chain; its full sequence is Protein held out wings (405 aa).

Positions Y142–I210 constitute a KH domain.

As to quaternary structure, homodimer. Interacts with Sxl; promoting nuclear retention of msl-2 transcripts. In terms of tissue distribution, during embryogenesis, expression is seen in mesodermal precursors of somatic, visceral and pharyngeal muscle. Later in embryogenesis, expression is restricted to heart and muscle attachment sites of the epidermis. During onset of metamorphosis, expression is seen in muscle and muscle attachment cells.

It localises to the nucleus. Functionally, RNA-binding protein involved in muscle development and dosage compensation. Vital role in steroid regulation of muscle development and to control heart rate. Required during embryogenesis, in late stages of somatic muscle development, for myotube migration and during metamorphosis for muscle reorganization. Required for integrin-mediated cell-adhesion in wing blade. Together with Sxl, acts as an inhibitor of dosage compensation in females by preventing production of msl-2 protein, an essential component of the MSL complex. Specifically binds to the 5'-UTR of msl-2 transcripts and cooperates with Sxl to promote nuclear retention of msl-2 mRNAs. The chain is Protein held out wings (how) from Drosophila melanogaster (Fruit fly).